The following is a 232-amino-acid chain: MSLIDTVRNTLVPVHREGYRFIAIFFVVSLALGFLWEPLMWIGFLLTAWCAYFFRDPERMTPIDDDLVISPADGTVSSVATVTPPEELGLGSEPMLRISVFMNVFNGHVNRAPMSGTVRRIAYRAGKFVNAELDKASQENERNGLVLETKHGQIGVVQIAGLVARRILCWTRESASLEAGERFGLIRFGSRLDVFLPAGAEPRVTVGQTATAGETVIAEFGSAKGPVISRRA.

The active-site Schiff-base intermediate with substrate; via pyruvic acid is serine 190. The residue at position 190 (serine 190) is a Pyruvic acid (Ser); by autocatalysis.

Belongs to the phosphatidylserine decarboxylase family. PSD-A subfamily. Heterodimer of a large membrane-associated beta subunit and a small pyruvoyl-containing alpha subunit. Requires pyruvate as cofactor. Post-translationally, is synthesized initially as an inactive proenzyme. Formation of the active enzyme involves a self-maturation process in which the active site pyruvoyl group is generated from an internal serine residue via an autocatalytic post-translational modification. Two non-identical subunits are generated from the proenzyme in this reaction, and the pyruvate is formed at the N-terminus of the alpha chain, which is derived from the carboxyl end of the proenzyme. The post-translation cleavage follows an unusual pathway, termed non-hydrolytic serinolysis, in which the side chain hydroxyl group of the serine supplies its oxygen atom to form the C-terminus of the beta chain, while the remainder of the serine residue undergoes an oxidative deamination to produce ammonia and the pyruvoyl prosthetic group on the alpha chain.

It is found in the cell membrane. It catalyses the reaction a 1,2-diacyl-sn-glycero-3-phospho-L-serine + H(+) = a 1,2-diacyl-sn-glycero-3-phosphoethanolamine + CO2. The protein operates within phospholipid metabolism; phosphatidylethanolamine biosynthesis; phosphatidylethanolamine from CDP-diacylglycerol: step 2/2. Functionally, catalyzes the formation of phosphatidylethanolamine (PtdEtn) from phosphatidylserine (PtdSer). The chain is Phosphatidylserine decarboxylase proenzyme from Sinorhizobium medicae (strain WSM419) (Ensifer medicae).